Consider the following 368-residue polypeptide: DNA replication and repair protein RecF (368 aa).

30–37 is a binding site for ATP; it reads GRNGQGKT.

This sequence belongs to the RecF family.

It is found in the cytoplasm. In terms of biological role, the RecF protein is involved in DNA metabolism; it is required for DNA replication and normal SOS inducibility. RecF binds preferentially to single-stranded, linear DNA. It also seems to bind ATP. The sequence is that of DNA replication and repair protein RecF from Trichlorobacter lovleyi (strain ATCC BAA-1151 / DSM 17278 / SZ) (Geobacter lovleyi).